The following is a 354-amino-acid chain: Putative cinnamyl alcohol dehydrogenase 4 (354 aa).

Zn(2+)-binding residues include Cys47, His69, Glu70, Cys100, Cys103, Cys106, Cys114, and Cys163. NADP(+) is bound by residues Thr167, 188–193, 211–216, Thr251, and 297–299; these read GLGGLG, STSESK, and SVT.

This sequence belongs to the zinc-containing alcohol dehydrogenase family. Homodimer. The cofactor is Zn(2+).

It carries out the reaction (E)-cinnamyl alcohol + NADP(+) = (E)-cinnamaldehyde + NADPH + H(+). The enzyme catalyses (E)-coniferol + NADP(+) = (E)-coniferaldehyde + NADPH + H(+). It catalyses the reaction (E)-sinapyl alcohol + NADP(+) = (E)-sinapaldehyde + NADPH + H(+). The catalysed reaction is (E)-4-coumaroyl alcohol + NADP(+) = (E)-4-coumaraldehyde + NADPH + H(+). It carries out the reaction (E)-caffeyl alcohol + NADP(+) = (E)-caffeyl aldehyde + NADPH + H(+). Its pathway is aromatic compound metabolism; phenylpropanoid biosynthesis. In terms of biological role, involved in lignin biosynthesis. Catalyzes the final step specific for the production of lignin monomers. Catalyzes the NADPH-dependent reduction of coniferaldehyde, 5-hydroxyconiferaldehyde, sinapaldehyde, 4-coumaraldehyde and caffeyl aldehyde to their respective alcohols. In Oryza sativa subsp. japonica (Rice), this protein is Putative cinnamyl alcohol dehydrogenase 4.